The sequence spans 627 residues: Membrane protein insertase YidC (627 aa).

The next 6 membrane-spanning stretches (helical) occupy residues 3–23, 376–396, 450–470, 502–522, 534–554, and 558–578; these read KNTV…SWLN, WGLI…PLAY, LPML…PTTI, FYGN…ILYI, EGMA…LFFF, and ASGL…QYMS.

It belongs to the OXA1/ALB3/YidC family. Type 1 subfamily. As to quaternary structure, interacts with the Sec translocase complex via SecD. Specifically interacts with transmembrane segments of nascent integral membrane proteins during membrane integration.

It localises to the cell inner membrane. Required for the insertion and/or proper folding and/or complex formation of integral membrane proteins into the membrane. Involved in integration of membrane proteins that insert both dependently and independently of the Sec translocase complex, as well as at least some lipoproteins. Aids folding of multispanning membrane proteins. This Porphyromonas gingivalis (strain ATCC 33277 / DSM 20709 / CIP 103683 / JCM 12257 / NCTC 11834 / 2561) protein is Membrane protein insertase YidC.